A 211-amino-acid polypeptide reads, in one-letter code: MATHERRVVFFDLDGTLHQQDMFGSFLRYLLRRQPLNALLVLPLLPIIAIALLIKGRAARWPMSLLLWGCTFGHSEARLQTLQADFVRWFRDNVTAFPLVQERLTTYLLSSDADIWLITGSPQPLVEAVYFDTPWLPRVNLIASQIQRGYGGWVLTMRCLGHEKVAQLERKIGTPLRLYSGYSDSNQDNPLLYFCQHRWRVTPRGELQQLE.

At 1 to 33 the chain is on the cytoplasmic side; that stretch reads MATHERRVVFFDLDGTLHQQDMFGSFLRYLLRR. Residues 34-54 form a helical membrane-spanning segment; that stretch reads QPLNALLVLPLLPIIAIALLI. Residues 55 to 211 lie on the Periplasmic side of the membrane; sequence KGRAARWPMS…TPRGELQQLE (157 aa).

The cofactor is Mg(2+).

The protein localises to the cell inner membrane. It catalyses the reaction a 1,2-diacyl-sn-glycero-3-phospho-(1'-sn-glycero-3'-phosphate) + H2O = a 1,2-diacyl-sn-glycero-3-phospho-(1'-sn-glycerol) + phosphate. It functions in the pathway phospholipid metabolism; phosphatidylglycerol biosynthesis; phosphatidylglycerol from CDP-diacylglycerol: step 2/2. In terms of biological role, lipid phosphatase which dephosphorylates phosphatidylglycerophosphate (PGP) to phosphatidylglycerol (PG). This is Phosphatidylglycerophosphatase C (pgpC) from Escherichia coli (strain K12).